The sequence spans 314 residues: Methionyl-tRNA formyltransferase (314 aa).

112–115 (SLLP) contacts (6S)-5,6,7,8-tetrahydrofolate.

It belongs to the Fmt family.

The enzyme catalyses L-methionyl-tRNA(fMet) + (6R)-10-formyltetrahydrofolate = N-formyl-L-methionyl-tRNA(fMet) + (6S)-5,6,7,8-tetrahydrofolate + H(+). Its function is as follows. Attaches a formyl group to the free amino group of methionyl-tRNA(fMet). The formyl group appears to play a dual role in the initiator identity of N-formylmethionyl-tRNA by promoting its recognition by IF2 and preventing the misappropriation of this tRNA by the elongation apparatus. This Legionella pneumophila (strain Paris) protein is Methionyl-tRNA formyltransferase.